Consider the following 396-residue polypeptide: Gamma-D-glutamyl-L-diamino acid endopeptidase 1 (396 aa).

2 consecutive LysM domains span residues 1–45 (MDIL…RIQI) and 51–95 (TSYT…TIQV). Positions 108-394 (QNYDYSMMMN…EALGIFLAGL (287 aa)) constitute a Peptidase M14 domain. Residues His162 and Glu165 each contribute to the Zn(2+) site. Asp255 serves as a coordination point for substrate. His307 is a binding site for Zn(2+). Tyr347 serves as the catalytic Proton donor. Glu366 functions as the Proton donor/acceptor in the catalytic mechanism.

Belongs to the peptidase M14 family. The cofactor is Zn(2+).

The catalysed reaction is Hydrolysis of gamma-D-glutamyl bonds to the L-terminus (position 7) of meso-diaminopimelic acid (meso-A2pm) in 7-(L-Ala-gamma-D-Glu)-meso-A2pm and 7-(L-Ala-gamma-D-Glu)-7-(D-Ala)-meso-A2pm. It is required that the D-terminal amino and carboxy groups of meso-A2pm are unsubstituted.. Its function is as follows. An endopeptidase which hydrolyzes the gamma-D-Glu-(L)meso-diaminopimelic acid bond of L-Ala-gamma-D-Glu-(L)meso-diaminopimelic acid and L-Ala-gamma-D-Glu-(L)meso-diaminopimelic acid(L)-D-Ala peptides. It is active on spore cortex peptidoglycan. This chain is Gamma-D-glutamyl-L-diamino acid endopeptidase 1, found in Lysinibacillus sphaericus (Bacillus sphaericus).